The following is a 79-amino-acid chain: NADH-ubiquinone oxidoreductase chain 5 (79 aa).

2 consecutive transmembrane segments (helical) span residues 5 to 27 (TPIM…TNPY) and 40 to 57 (VMYA…FILS).

The protein belongs to the complex I subunit 5 family. In terms of assembly, core subunit of respiratory chain NADH dehydrogenase (Complex I) which is composed of 45 different subunits.

Its subcellular location is the mitochondrion inner membrane. The catalysed reaction is a ubiquinone + NADH + 5 H(+)(in) = a ubiquinol + NAD(+) + 4 H(+)(out). Functionally, core subunit of the mitochondrial membrane respiratory chain NADH dehydrogenase (Complex I) which catalyzes electron transfer from NADH through the respiratory chain, using ubiquinone as an electron acceptor. Essential for the catalytic activity and assembly of complex I. The protein is NADH-ubiquinone oxidoreductase chain 5 (MT-ND5) of Macaca fascicularis (Crab-eating macaque).